Here is a 301-residue protein sequence, read N- to C-terminus: uncharacterized protein (301 aa).

Active-site charge relay system residues include serine 44 and tyrosine 107. Tyrosine 133 (proton donor) is an active-site residue. Residue lysine 162 is the Schiff-base intermediate with substrate of the active site.

This sequence belongs to the DapA family. In terms of assembly, homotetramer.

Its subcellular location is the cytoplasm. This is an uncharacterized protein from Pyrobaculum arsenaticum (strain DSM 13514 / JCM 11321 / PZ6).